Reading from the N-terminus, the 119-residue chain is Ribonuclease P protein component (119 aa).

It belongs to the RnpA family. In terms of assembly, consists of a catalytic RNA component (M1 or rnpB) and a protein subunit.

The enzyme catalyses Endonucleolytic cleavage of RNA, removing 5'-extranucleotides from tRNA precursor.. Its function is as follows. RNaseP catalyzes the removal of the 5'-leader sequence from pre-tRNA to produce the mature 5'-terminus. It can also cleave other RNA substrates such as 4.5S RNA. The protein component plays an auxiliary but essential role in vivo by binding to the 5'-leader sequence and broadening the substrate specificity of the ribozyme. In Streptococcus pyogenes serotype M12 (strain MGAS2096), this protein is Ribonuclease P protein component.